The following is a 239-amino-acid chain: Endolytic peptidoglycan transglycosylase RlpA (239 aa).

An N-terminal signal peptide occupies residues 1 to 25; that stretch reads MTLTRKTLFLLTAAFGTHSLQTASA. The region spanning 160-239 is the SPOR domain; that stretch reads VAENKDIFID…GMVRAVLTAG (80 aa).

The protein belongs to the RlpA family.

Functionally, lytic transglycosylase with a strong preference for naked glycan strands that lack stem peptides. This Neisseria meningitidis serogroup B (strain ATCC BAA-335 / MC58) protein is Endolytic peptidoglycan transglycosylase RlpA.